The following is a 248-amino-acid chain: 5'-nucleotidase SurE (248 aa).

A divalent metal cation contacts are provided by Asp8, Asp9, Ser39, and Asn91.

It belongs to the SurE nucleotidase family. A divalent metal cation serves as cofactor.

The protein resides in the cytoplasm. The catalysed reaction is a ribonucleoside 5'-phosphate + H2O = a ribonucleoside + phosphate. In terms of biological role, nucleotidase that shows phosphatase activity on nucleoside 5'-monophosphates. This is 5'-nucleotidase SurE from Geobacter sp. (strain M21).